Consider the following 448-residue polypeptide: UDP-N-acetylmuramoylalanine--D-glutamate ligase (448 aa).

116 to 122 (GSNAKST) lines the ATP pocket.

It belongs to the MurCDEF family.

The protein resides in the cytoplasm. It catalyses the reaction UDP-N-acetyl-alpha-D-muramoyl-L-alanine + D-glutamate + ATP = UDP-N-acetyl-alpha-D-muramoyl-L-alanyl-D-glutamate + ADP + phosphate + H(+). It functions in the pathway cell wall biogenesis; peptidoglycan biosynthesis. Its function is as follows. Cell wall formation. Catalyzes the addition of glutamate to the nucleotide precursor UDP-N-acetylmuramoyl-L-alanine (UMA). The protein is UDP-N-acetylmuramoylalanine--D-glutamate ligase of Pseudomonas syringae pv. syringae (strain B728a).